The following is a 262-amino-acid chain: Transmembrane and immunoglobulin domain-containing protein 1 (262 aa).

Residues 1-29 form the signal peptide; the sequence is MAWKSSVIMQMGRFLLLVILFLPREMTSS. The Ig-like C2-type 1 domain maps to 30–114; that stretch reads VLTVNGKTEN…LGRDQSVSVS (85 aa). The Extracellular portion of the chain corresponds to 30–220; it reads VLTVNGKTEN…IVKDKTVGVP (191 aa). The cysteines at positions 54 and 103 are disulfide-linked. Asparagine 58, asparagine 83, asparagine 118, asparagine 158, and asparagine 190 each carry an N-linked (GlcNAc...) asparagine glycan. An Ig-like C2-type 2 domain is found at 122-207; the sequence is PPLLSGNDFQ…KSSLKTESLD (86 aa). An intrachain disulfide couples cysteine 143 to cysteine 195. Residues 221–241 traverse the membrane as a helical segment; it reads IEPIIAACVVIFLTLCFGLIA. Over 242–262 the chain is Cytoplasmic; it reads RRKKIMKLCMKDKDPHSETAL.

In terms of assembly, homodimer. Post-translationally, N-glycosylated.

It is found in the cell membrane. Its subcellular location is the cytoplasm. May control cell-cell adhesion, cell migration and proliferation, cell morphology, and protects renal epithelial cells from oxidative cell injury to promote cell survival. This is Transmembrane and immunoglobulin domain-containing protein 1 from Homo sapiens (Human).